Here is a 340-residue protein sequence, read N- to C-terminus: Zinc finger protein 367 (340 aa).

Positions 96 to 140 (LPTLRGAPPSSASVAAVSGGEDEEEASSPDSGHLKDGIRRGRPRA) are disordered. Over residues 101-114 (GAPPSSASVAAVSG) the composition is skewed to low complexity. Residues 127-140 (GHLKDGIRRGRPRA) are compositionally biased toward basic and acidic residues. 2 C2H2-type zinc fingers span residues 157 to 179 (IRCN…KRTH) and 185 to 209 (YLCD…QRLH). Positions 280 to 317 (KGKLVQKADQEQQDPLEYLQSDEEDDEKSGAQRRLQEQ) are disordered. The stretch at 299-332 (QSDEEDDEKSGAQRRLQEQRERLHGALALIELAN) forms a coiled coil. Position 300 is a phosphoserine (S300). The segment covering 307-317 (KSGAQRRLQEQ) has biased composition (basic and acidic residues).

This sequence belongs to the krueppel C2H2-type zinc-finger protein family.

The protein localises to the nucleus. Its function is as follows. Transcriptional activator. May be involved in transcriptional activation of erythroid genes. The polypeptide is Zinc finger protein 367 (Znf367) (Rattus norvegicus (Rat)).